We begin with the raw amino-acid sequence, 226 residues long: Endonuclease NucS (226 aa).

Belongs to the NucS endonuclease family.

Its subcellular location is the cytoplasm. Its function is as follows. Cleaves both 3' and 5' ssDNA extremities of branched DNA structures. This is Endonuclease NucS from Mycobacterium tuberculosis (strain ATCC 25618 / H37Rv).